Here is a 137-residue protein sequence, read N- to C-terminus: Transcription antitermination protein NusB (137 aa).

The protein belongs to the NusB family.

In terms of biological role, involved in transcription antitermination. Required for transcription of ribosomal RNA (rRNA) genes. Binds specifically to the boxA antiterminator sequence of the ribosomal RNA (rrn) operons. This is Transcription antitermination protein NusB from Proteus mirabilis (strain HI4320).